The sequence spans 45 residues: Iota-conotoxin-like R11.12 (45 aa).

Disulfide bonds link cysteine 5/cysteine 19, cysteine 12/cysteine 22, cysteine 18/cysteine 27, and cysteine 21/cysteine 36. The residue at position 43 (leucine 43) is a D-leucine. Residue arginine 45 is a propeptide, removed by a carboxypeptidase.

Belongs to the conotoxin I1 superfamily. In terms of tissue distribution, expressed by the venom duct.

Its subcellular location is the secreted. In terms of biological role, iota-conotoxins bind to voltage-gated sodium channels (Nav) and act as agonists by shifting the voltage-dependence of activation to more hyperpolarized levels. Produces general excitatory symptoms. This is Iota-conotoxin-like R11.12 from Conus radiatus (Rayed cone).